A 95-amino-acid chain; its full sequence is RING finger protein Z (95 aa).

Gly-2 carries the N-myristoyl glycine; by host lipid modification. Residues 38–74 form an RING-type; atypical zinc finger; the sequence is CKRCWFATKGLIACSDHYLCLNCLTIMLSDGNFCEVC. The short motif at 88–91 is the PTAP/PSAP motif element; the sequence is PSAP.

This sequence belongs to the arenaviridae Z protein family. Interacts with protein NP; this interaction probably directs the encapsidated genome to budding sites. Interacts (via RING domain) with polymerase L; this interaction inhibits viral transcription and replication, Z partially blocks the product exit tunnel for the releasing nascent RNA product. Interacts with the glycoprotein complex; this interaction plays a role in virion budding. Interacts with host eIF4E; this interaction results in eIF4E reduced affinity for its substrate, the 5'-m7 G cap structure. Interacts (via late-budding domain) with host TSG101; this interaction is essential for budding and release of viral particles. Interacts with host RPLP0; this interaction may serve to load ribosome-like particles inside the virion. Interacts with host PML; this interaction induces PML bodies redistribution in the cytoplasm upon viral infection. Post-translationally, myristoylation is required for the role of RING finger protein Z in assembly and budding.

It is found in the virion. It localises to the host cytoplasm. The protein localises to the host perinuclear region. The protein resides in the host cell membrane. In terms of biological role, plays a crucial role in virion assembly and budding. Expressed late in the virus life cycle, it acts as an inhibitor of viral transcription and RNA synthesis by interacting with the viral polymerase L. Presumably recruits the NP encapsidated genome to cellular membranes at budding sites via direct interaction with NP. Plays critical roles in the final steps of viral release by interacting with host TSG101, a member of the vacuolar protein-sorting pathway and using other cellular host proteins involved in vesicle formation pathway. The budding of the virus progeny occurs after association of protein Z with the viral glycoprotein complex SSP-GP1-GP2 at the cell periphery, step that requires myristoylation of protein Z. Also selectively represses protein production by associating with host eIF4E. In cell-based minigenome assay, has an inhibitory effect on the ribonucleoprotein machinery (vRNP), which is responsible for the replication and transcription of the viral genome. This is RING finger protein Z from Sooretamys angouya (Paraguayan rice rat).